The following is a 471-amino-acid chain: Tripartite motif-containing protein 60 (471 aa).

The segment at 16–57 adopts an RING-type zinc-finger fold; sequence CPICLEYLKDPVTINCGHNFCRSCLSVSWKDLDDTFPCPVCR. The B box-type zinc-finger motif lies at 92-133; the sequence is KENAMCEKHNQFLTLFCVKDLEILCTQCSFSTKHQKHYICPI. Residues Cys-97, His-100, Cys-119, and His-125 each coordinate Zn(2+). Positions 171–223 form a coiled coil; it reads ELKKKVEYKREEINSEFEQIRLFLQNEQEMILRQIQDEEMNILAKLNENLVEL. Positions 277-470 constitute a B30.2/SPRY domain; that stretch reads FSLPPQYSGL…LKICSVSDSE (194 aa).

It belongs to the TRIM/RBCC family.

In terms of biological role, E3 SUMO-protein ligase that mediates SUMOylation of TAB2 leading to inhibition of NF-kappa-B and MAPK pathways by suppressing the TRAF6/TAB2/TAK1 complex. The sequence is that of Tripartite motif-containing protein 60 (TRIM60) from Homo sapiens (Human).